Here is a 145-residue protein sequence, read N- to C-terminus: Male-specific protein scotti (145 aa).

Residues 1-34 (MANNRLMPEGQIIEEDMDGEDQNARELDIDDDDD) are disordered. Positions 12 to 21 (IIEEDMDGED) are enriched in acidic residues.

The protein belongs to the male-specific scotti family.

In terms of biological role, post-meiotically transcribed gene that has a role in late spermiogenesis; required for actin cone progression during spermatid individualization. The protein is Male-specific protein scotti of Drosophila willistoni (Fruit fly).